We begin with the raw amino-acid sequence, 160 residues long: Arginine repressor (160 aa).

This sequence belongs to the ArgR family.

Its subcellular location is the cytoplasm. Its pathway is amino-acid biosynthesis; L-arginine biosynthesis [regulation]. In terms of biological role, regulates arginine biosynthesis genes. The chain is Arginine repressor from Anaeromyxobacter dehalogenans (strain 2CP-1 / ATCC BAA-258).